A 443-amino-acid polypeptide reads, in one-letter code: UDP-N-acetylmuramate--L-alanine ligase (443 aa).

111–117 (GAHGKTS) provides a ligand contact to ATP.

The protein belongs to the MurCDEF family.

The protein localises to the cytoplasm. It catalyses the reaction UDP-N-acetyl-alpha-D-muramate + L-alanine + ATP = UDP-N-acetyl-alpha-D-muramoyl-L-alanine + ADP + phosphate + H(+). It functions in the pathway cell wall biogenesis; peptidoglycan biosynthesis. In terms of biological role, cell wall formation. In Ligilactobacillus salivarius (strain UCC118) (Lactobacillus salivarius), this protein is UDP-N-acetylmuramate--L-alanine ligase.